Here is a 158-residue protein sequence, read N- to C-terminus: Transcription factor BTF3 homolog 4 (158 aa).

Lys5 is subject to N6-methyllysine. An NAC-A/B domain is found at 33-98 (TADDKKLQSS…AEAKPITEML (66 aa)). At Thr111 the chain carries Phosphothreonine. The interval 122–158 (RQVLDSKAPKPEDIDEEDDDVPDLVENFDEASKNEAN) is disordered. A compositionally biased stretch (acidic residues) spans 134 to 150 (DIDEEDDDVPDLVENFD).

This sequence belongs to the NAC-beta family.

The sequence is that of Transcription factor BTF3 homolog 4 (BTF3L4) from Homo sapiens (Human).